A 104-amino-acid polypeptide reads, in one-letter code: Chromogranin-A (104 aa).

A disulfide bridge connects residues Cys17 and Cys38.

Belongs to the chromogranin/secretogranin protein family. Dimer.

The protein localises to the cytoplasmic vesicle. It localises to the secretory vesicle. It is found in the secreted. In terms of biological role, chromogranin A probably has a paracrine role in the regulation of secretion or maturation. The sequence is that of Chromogranin-A (CHGA) from Struthio camelus (Common ostrich).